The primary structure comprises 99 residues: U1-theraphotoxin-Lsp1b (99 aa).

A signal peptide spans 1 to 23 (MRSLTLAALLLCSLLLVFHTSAA). Residues 24 to 50 (EELQAQEGHLMIPGDTDTALETVDDER) constitute a propeptide that is removed on maturation. Disulfide bonds link Cys54/Cys67, Cys58/Cys91, Cys72/Cys74, and Cys85/Cys96.

Belongs to the neurotoxin 12 (Hwtx-2) family. 04 (lasiotoxin) subfamily. Expressed by the venom gland.

The protein localises to the secreted. In terms of biological role, toxin that causes irreversible contractile paralysis into adult Aedes aegypti resulting in 100% mortality after 24 hours. This is U1-theraphotoxin-Lsp1b from Lasiodora sp. (strain IBSP 8539) (Brazilian salmon pink birdeater).